The sequence spans 330 residues: Malate dehydrogenase (330 aa).

11–17 (GGAGQIA) lines the NAD(+) pocket. 2 residues coordinate substrate: Arg-92 and Arg-98. Residues Asn-105, Gln-112, and 129-131 (VGN) contribute to the NAD(+) site. The substrate site is built by Asn-131 and Arg-162. His-187 serves as the catalytic Proton acceptor.

The protein belongs to the LDH/MDH superfamily. MDH type 2 family.

The catalysed reaction is (S)-malate + NAD(+) = oxaloacetate + NADH + H(+). Catalyzes the reversible oxidation of malate to oxaloacetate. The polypeptide is Malate dehydrogenase (Protochlamydia amoebophila (strain UWE25)).